The sequence spans 502 residues: Glycogen synthase (502 aa).

Lys24 contacts ADP-alpha-D-glucose.

Belongs to the glycosyltransferase 1 family. Bacterial/plant glycogen synthase subfamily.

The catalysed reaction is [(1-&gt;4)-alpha-D-glucosyl](n) + ADP-alpha-D-glucose = [(1-&gt;4)-alpha-D-glucosyl](n+1) + ADP + H(+). It participates in glycan biosynthesis; glycogen biosynthesis. Functionally, synthesizes alpha-1,4-glucan chains using ADP-glucose. The polypeptide is Glycogen synthase (Nitrosomonas eutropha (strain DSM 101675 / C91 / Nm57)).